Reading from the N-terminus, the 203-residue chain is Protein shisa-like-1a (203 aa).

The N-terminal stretch at 1–25 (MIMNGRWSFNTLAIIFILLSTAALS) is a signal peptide. Topologically, residues 26–97 (AHFRVCEPYS…SDSFAHNNYT (72 aa)) are extracellular. N-linked (GlcNAc...) asparagine glycosylation is found at Asn53, Asn63, Asn72, Asn83, and Asn95. The helical transmembrane segment at 98-118 (ALIGVWIYGFFVMVLLALDFL) threads the bilayer. The Cytoplasmic portion of the chain corresponds to 119–203 (YYSAMNYELC…LLSFQTSTAW (85 aa)). The tract at residues 157–191 (ELNTGPGLSQQQQLHLHHHHHHHHPRHSLRGDTQS) is disordered. Residues 161–170 (GPGLSQQQQL) are compositionally biased toward low complexity. The segment covering 171–184 (HLHHHHHHHHPRHS) has biased composition (basic residues).

Belongs to the shisa family.

Its subcellular location is the membrane. This Danio rerio (Zebrafish) protein is Protein shisa-like-1a (shisal1a).